The following is a 123-amino-acid chain: Small ribosomal subunit protein uS12 (123 aa).

Asp-89 bears the 3-methylthioaspartic acid mark.

Belongs to the universal ribosomal protein uS12 family. Part of the 30S ribosomal subunit. Contacts proteins S8 and S17. May interact with IF1 in the 30S initiation complex.

Functionally, with S4 and S5 plays an important role in translational accuracy. Its function is as follows. Interacts with and stabilizes bases of the 16S rRNA that are involved in tRNA selection in the A site and with the mRNA backbone. Located at the interface of the 30S and 50S subunits, it traverses the body of the 30S subunit contacting proteins on the other side and probably holding the rRNA structure together. The combined cluster of proteins S8, S12 and S17 appears to hold together the shoulder and platform of the 30S subunit. The protein is Small ribosomal subunit protein uS12 of Rhizobium meliloti (strain 1021) (Ensifer meliloti).